A 1423-amino-acid polypeptide reads, in one-letter code: ABC transporter G family member 40 (1423 aa).

Positions 1-19 are enriched in polar residues; sequence MEGTSFHQASNSMRRNSSV. The segment at 1 to 36 is disordered; sequence MEGTSFHQASNSMRRNSSVWKKDSGREIFSRSSREE. Asn-16 carries N-linked (GlcNAc...) asparagine glycosylation. The segment covering 20-34 has biased composition (basic and acidic residues); sequence WKKDSGREIFSRSSR. An ABC transporter 1 domain is found at 154-427; sequence LNTLHLVPNR…FETMGFKCPP (274 aa). 187–194 lines the ATP pocket; that stretch reads GPPSSGKT. An N-linked (GlcNAc...) asparagine glycan is attached at Asn-376. The ABC transmembrane type-2 1 domain maps to 505–718; sequence ELVKTSFSRE…GQNAILANEF (214 aa). A run of 6 helical transmembrane segments spans residues 523-543, 562-582, 611-631, 643-663, 667-687, and 696-716; these read FVYYFKFGQLLVMAFLTMTLF, ALFFILMMLMFNGMSELSMTI, IPISFMEAALTTFITYYVIGF, ILLVLMNQMASALFKMVAALG, IVANTFGAFAMLVFFALGGVV, and WWIWGYWISPIMYGQNAILAN. A glycan (N-linked (GlcNAc...) asparagine) is linked at Asn-729. Residues 756-776 form a helical membrane-spanning segment; that stretch reads GALLGFVVLFNFGFTLALTFL. In terms of domain architecture, ABC transporter 2 spans 825–1077; it reads ITFDNVVYSV…HLINYFESIQ (253 aa). 870–877 contributes to the ATP binding site; it reads GVSGAGKT. N-linked (GlcNAc...) asparagine glycosylation is present at Asn-895. Position 962 is a phosphothreonine (Thr-962). The ABC transmembrane type-2 2 domain maps to 1150–1364; it reads TQCMASLWKQ…TLYGLIASQF (215 aa). 6 helical membrane passes run 1174-1194, 1207-1227, 1257-1277, 1284-1304, 1314-1334, and 1341-1361; these read FLFTIGIALMFGTMFWDLGGK, SMYTAVLFLGLQNAASVQPVV, IPYVLVQAIVYGLIVYAMIGF, FFWYLFFMYGSFLTFTFYGMM, IASVVSSAFYGIWNLFSGFLI, and VWWEWYYWLCPVAWTLYGLIA. Asn-1375 carries N-linked (GlcNAc...) asparagine glycosylation. Residues 1395-1415 form a helical membrane-spanning segment; sequence VVAAMNVIFPLLFAVIFAIGI.

The protein belongs to the ABC transporter superfamily. ABCG family. PDR (TC 3.A.1.205) subfamily. As to quaternary structure, interacts with LECRK91 and LECRK92. Mostly observed in inflorescence meristems relative to cauline leaves and developing siliques. Ubiquitous with higher levels in leaves, stems and flowers. Also present in primary and lateral roots. In seeds, mainly expressed in the embryo and, to a lesser extent, in the endosperm.

The protein resides in the cell membrane. The enzyme catalyses abscisate(out) + ATP + H2O = abscisate(in) + ADP + phosphate + H(+). Its activity is regulated as follows. Inhibited by glibenclamide, verapamil and vanadate (ABC transporters inhibitors). Functionally, high affinity abscisic acid (ABA) transporter that mediates the import of ABA, with a preference for (+)-ABA, through the plasma membrane, especially in guard cells, and is involved in the intercellular and intracellular ABA signaling pathways leading, for example, to stomatal closure, thus conferring drought tolerance. Together with ABCG30, import into the embryo the ABA delivered from the endosperm via ABCG25 and ABCG31-mediated export to suppress radicle extension and subsequent embryonic growth. May be a general defense protein. Functions as a pump to exclude Pb(2+) ions and/or Pb(2+)-containing toxic compounds from the cytoplasm. Contributes to Pb(2+) ions resistance. Confers some resistance to the terpene sclareol. Its function is as follows. (Microbial infection) Involved in resistance response to the pathogenic oomycetes Phytophthora infestans and Phytophthora capsici. The sequence is that of ABC transporter G family member 40 from Arabidopsis thaliana (Mouse-ear cress).